The sequence spans 128 residues: Small ribosomal subunit protein uS11 (128 aa).

This sequence belongs to the universal ribosomal protein uS11 family. As to quaternary structure, part of the 30S ribosomal subunit. Interacts with proteins S7 and S18. Binds to IF-3.

Located on the platform of the 30S subunit, it bridges several disparate RNA helices of the 16S rRNA. Forms part of the Shine-Dalgarno cleft in the 70S ribosome. The sequence is that of Small ribosomal subunit protein uS11 from Vesicomyosocius okutanii subsp. Calyptogena okutanii (strain HA).